Reading from the N-terminus, the 134-residue chain is ATP synthase epsilon chain (134 aa).

Over residues Ala94–His104 the composition is skewed to basic and acidic residues. The tract at residues Ala94 to Asn115 is disordered.

The protein belongs to the ATPase epsilon chain family. In terms of assembly, F-type ATPases have 2 components, CF(1) - the catalytic core - and CF(0) - the membrane proton channel. CF(1) has five subunits: alpha(3), beta(3), gamma(1), delta(1), epsilon(1). CF(0) has three main subunits: a, b and c.

It is found in the cell membrane. In terms of biological role, produces ATP from ADP in the presence of a proton gradient across the membrane. This chain is ATP synthase epsilon chain, found in Staphylococcus epidermidis (strain ATCC 12228 / FDA PCI 1200).